Consider the following 301-residue polypeptide: Methionyl-tRNA formyltransferase (301 aa).

Residue 109 to 112 (SILP) participates in (6S)-5,6,7,8-tetrahydrofolate binding.

This sequence belongs to the Fmt family.

The enzyme catalyses L-methionyl-tRNA(fMet) + (6R)-10-formyltetrahydrofolate = N-formyl-L-methionyl-tRNA(fMet) + (6S)-5,6,7,8-tetrahydrofolate + H(+). Its function is as follows. Attaches a formyl group to the free amino group of methionyl-tRNA(fMet). The formyl group appears to play a dual role in the initiator identity of N-formylmethionyl-tRNA by promoting its recognition by IF2 and preventing the misappropriation of this tRNA by the elongation apparatus. The polypeptide is Methionyl-tRNA formyltransferase (Campylobacter curvus (strain 525.92)).